The chain runs to 175 residues: MSIDDLKSKIPDFAKDVRLNLSSMASDETLTPQQKYGLFVACGIASRNADVRKALVAEAAGKVDASVIQAAKAAASIMGMNNVYYRFVHLASNKDYRTMPARLRMNVISNPGVDKIDFELWSLAVSAINGCGMCIDAHEDVLRKANVTAEAIQAAVRFASIIQSAAIALEAADTE.

The Proton donor role is filled by Cys131. Cys131 and Cys134 are joined by a disulfide. The active-site Cysteine sulfenic acid (-SOH) intermediate is Cys134.

Belongs to the AhpD family.

The enzyme catalyses N(6)-[(R)-dihydrolipoyl]-L-lysyl-[lipoyl-carrier protein] + a hydroperoxide = N(6)-[(R)-lipoyl]-L-lysyl-[lipoyl-carrier protein] + an alcohol + H2O. Its function is as follows. Antioxidant protein with alkyl hydroperoxidase activity. Required for the reduction of the AhpC active site cysteine residues and for the regeneration of the AhpC enzyme activity. The chain is Alkyl hydroperoxide reductase AhpD from Brucella abortus (strain 2308).